An 84-amino-acid chain; its full sequence is Dolichol phosphate-mannose biosynthesis regulatory protein (84 aa).

2 consecutive transmembrane segments (helical) span residues 11–31 (FGLVAVSLIIFTYYTTWVILL) and 49–69 (YAVLLPLAAGLLLLLFVGLFI).

This sequence belongs to the DPM2 family. As to quaternary structure, component of the dolichol-phosphate mannose (DPM) synthase complex composed of DPM1, DPM2 and DPM3; in the complex interacts directly with DPM3. Component of the glycosylphosphatidylinositol-N-acetylglucosaminyltransferase (GPI-GnT) complex composed at least by PIGA, PIGC, PIGH, PIGP, PIGQ, PIGY and DPM2. Interacts with PIGA, PIGC and PIGQ.

The protein localises to the endoplasmic reticulum membrane. It participates in protein modification; protein glycosylation. Functionally, regulates the biosynthesis of dolichol phosphate-mannose. Regulatory subunit of the dolichol-phosphate mannose (DPM) synthase complex; essential for the ER localization and stable expression of DPM1. Part of the glycosylphosphatidylinositol-N-acetylglucosaminyltransferase (GPI-GnT) complex that catalyzes the transfer of N-acetylglucosamine from UDP-N-acetylglucosamine to phosphatidylinositol and participates in the first step of GPI biosynthesis. May act by regulating the GPI-GNT complex. The protein is Dolichol phosphate-mannose biosynthesis regulatory protein of Rattus norvegicus (Rat).